Reading from the N-terminus, the 113-residue chain is Large ribosomal subunit protein bL19 (113 aa).

This sequence belongs to the bacterial ribosomal protein bL19 family.

This protein is located at the 30S-50S ribosomal subunit interface and may play a role in the structure and function of the aminoacyl-tRNA binding site. This Corynebacterium diphtheriae (strain ATCC 700971 / NCTC 13129 / Biotype gravis) protein is Large ribosomal subunit protein bL19.